The following is a 485-amino-acid chain: NADH-quinone oxidoreductase subunit N (485 aa).

Helical transmembrane passes span leucine 3–phenylalanine 23, histidine 30–tryptophan 50, tyrosine 67–valine 87, phenylalanine 96–serine 116, leucine 120–phenylalanine 140, leucine 154–phenylalanine 174, phenylalanine 202–phenylalanine 222, alanine 247–leucine 267, tryptophan 271–isoleucine 291, methionine 299–glycine 319, leucine 332–isoleucine 352, alanine 375–leucine 395, tryptophan 411–isoleucine 431, and leucine 453–leucine 473.

The protein belongs to the complex I subunit 2 family. As to quaternary structure, NDH-1 is composed of 14 different subunits. Subunits NuoA, H, J, K, L, M, N constitute the membrane sector of the complex.

It is found in the cell membrane. It catalyses the reaction a quinone + NADH + 5 H(+)(in) = a quinol + NAD(+) + 4 H(+)(out). Its function is as follows. NDH-1 shuttles electrons from NADH, via FMN and iron-sulfur (Fe-S) centers, to quinones in the respiratory chain. The immediate electron acceptor for the enzyme in this species is believed to be ubiquinone. Couples the redox reaction to proton translocation (for every two electrons transferred, four hydrogen ions are translocated across the cytoplasmic membrane), and thus conserves the redox energy in a proton gradient. The chain is NADH-quinone oxidoreductase subunit N from Dehalococcoides mccartyi (strain ATCC BAA-2100 / JCM 16839 / KCTC 5957 / BAV1).